We begin with the raw amino-acid sequence, 158 residues long: 2-C-methyl-D-erythritol 2,4-cyclodiphosphate synthase (158 aa).

Positions 9 and 11 each coordinate a divalent metal cation. 4-CDP-2-C-methyl-D-erythritol 2-phosphate-binding positions include 9–11 (DVH) and 35–36 (HS). Histidine 43 contacts a divalent metal cation. Residues 57-59 (DLG), 62-66 (FPDTD), 133-136 (TTTE), phenylalanine 140, and arginine 143 each bind 4-CDP-2-C-methyl-D-erythritol 2-phosphate.

The protein belongs to the IspF family. As to quaternary structure, homotrimer. A divalent metal cation is required as a cofactor.

It carries out the reaction 4-CDP-2-C-methyl-D-erythritol 2-phosphate = 2-C-methyl-D-erythritol 2,4-cyclic diphosphate + CMP. The protein operates within isoprenoid biosynthesis; isopentenyl diphosphate biosynthesis via DXP pathway; isopentenyl diphosphate from 1-deoxy-D-xylulose 5-phosphate: step 4/6. Its function is as follows. Involved in the biosynthesis of isopentenyl diphosphate (IPP) and dimethylallyl diphosphate (DMAPP), two major building blocks of isoprenoid compounds. Catalyzes the conversion of 4-diphosphocytidyl-2-C-methyl-D-erythritol 2-phosphate (CDP-ME2P) to 2-C-methyl-D-erythritol 2,4-cyclodiphosphate (ME-CPP) with a corresponding release of cytidine 5-monophosphate (CMP). The polypeptide is 2-C-methyl-D-erythritol 2,4-cyclodiphosphate synthase (Desulfitobacterium hafniense (strain DSM 10664 / DCB-2)).